We begin with the raw amino-acid sequence, 522 residues long: Protein nucleotidyltransferase YdiU (522 aa).

8 residues coordinate ATP: Gly-109, Gly-111, Arg-112, Lys-132, Asp-144, Gly-145, Arg-195, and Arg-202. Asp-271 serves as the catalytic Proton acceptor. Positions 272 and 281 each coordinate Mg(2+). Residue Asp-281 coordinates ATP.

Belongs to the SELO family. Mg(2+) is required as a cofactor. Requires Mn(2+) as cofactor.

The catalysed reaction is L-seryl-[protein] + ATP = 3-O-(5'-adenylyl)-L-seryl-[protein] + diphosphate. The enzyme catalyses L-threonyl-[protein] + ATP = 3-O-(5'-adenylyl)-L-threonyl-[protein] + diphosphate. It carries out the reaction L-tyrosyl-[protein] + ATP = O-(5'-adenylyl)-L-tyrosyl-[protein] + diphosphate. It catalyses the reaction L-histidyl-[protein] + UTP = N(tele)-(5'-uridylyl)-L-histidyl-[protein] + diphosphate. The catalysed reaction is L-seryl-[protein] + UTP = O-(5'-uridylyl)-L-seryl-[protein] + diphosphate. The enzyme catalyses L-tyrosyl-[protein] + UTP = O-(5'-uridylyl)-L-tyrosyl-[protein] + diphosphate. Nucleotidyltransferase involved in the post-translational modification of proteins. It can catalyze the addition of adenosine monophosphate (AMP) or uridine monophosphate (UMP) to a protein, resulting in modifications known as AMPylation and UMPylation. In Burkholderia vietnamiensis (strain G4 / LMG 22486) (Burkholderia cepacia (strain R1808)), this protein is Protein nucleotidyltransferase YdiU.